The following is a 522-amino-acid chain: Glucans biosynthesis protein G (522 aa).

Residues 1 to 33 (MLVNILSKKPRAASVRWLGATVLFTLLTSPAWA) form the signal peptide.

It belongs to the OpgD/OpgG family.

The protein localises to the periplasm. It functions in the pathway glycan metabolism; osmoregulated periplasmic glucan (OPG) biosynthesis. In terms of biological role, involved in the biosynthesis of osmoregulated periplasmic glucans (OPGs). In Serratia proteamaculans (strain 568), this protein is Glucans biosynthesis protein G.